The primary structure comprises 908 residues: 26S proteasome non-ATPase regulatory subunit 2 (908 aa).

Met1 carries the post-translational modification N-acetylmethionine. The tract at residues Met1–Leu52 is disordered. Residues Pro10–Pro21 show a composition bias toward low complexity. At Ser16 the chain carries Phosphoserine. The residue at position 24 (Thr24) is a Phosphothreonine. Positions Thr24–Leu52 are enriched in basic and acidic residues. 2 positions are modified to phosphoserine: Ser29 and Ser147. Tyr194 carries the phosphotyrosine modification. Ser361 and Ser363 each carry phosphoserine. PC repeat units follow at residues Ser409–Ser442, Gly443–Leu479, Gly480–Val514, Val517–Lys551, and Leu560–Ser589. Position 551 is an N6-acetyllysine (Lys551). The segment covering Lys623–Pro643 has biased composition (basic and acidic residues). Positions Lys623–Asp645 are disordered. 2 PC repeats span residues Leu692–Tyr723 and Ala742–Asn757. The segment at Asp708–Asn903 is required for interaction with UBLCP1.

This sequence belongs to the proteasome subunit S2 family. Component of the 19S proteasome regulatory particle complex. The 26S proteasome consists of a 20S core particle (CP) and two 19S regulatory subunits (RP). The regulatory particle is made of a lid composed of 9 subunits, a base containing 6 ATPases and few additional components including PSMD2. Interacts with RPGRIP1L. Interacts with CRY1 in a KDM8-dependent manner. Interacts (via C-terminus) with phosphatase UBLCP1 (via ubiquitin-like domain); the interaction recruits UBLCP1 to the 19S regulatory particle where it dephosphorylates 19S subunit PSMC2/RPT1 which impairs PSMC2 ATPase activity and disrupts 26S proteasome assembly. As to expression, found in skeletal muscle, liver, heart, brain, kidney, pancreas, lung and placenta.

In terms of biological role, component of the 26S proteasome, a multiprotein complex involved in the ATP-dependent degradation of ubiquitinated proteins. This complex plays a key role in the maintenance of protein homeostasis by removing misfolded or damaged proteins, which could impair cellular functions, and by removing proteins whose functions are no longer required. Therefore, the proteasome participates in numerous cellular processes, including cell cycle progression, apoptosis, or DNA damage repair. Functionally, binds to the intracellular domain of tumor necrosis factor type 1 receptor. The binding domain of TRAP1 and TRAP2 resides outside the death domain of TNFR1. The protein is 26S proteasome non-ATPase regulatory subunit 2 (PSMD2) of Homo sapiens (Human).